A 272-amino-acid chain; its full sequence is Acetylglutamate kinase (272 aa).

Substrate contacts are provided by residues 41-42 (GG), R63, and N166.

This sequence belongs to the acetylglutamate kinase family. ArgB subfamily.

The protein resides in the cytoplasm. The enzyme catalyses N-acetyl-L-glutamate + ATP = N-acetyl-L-glutamyl 5-phosphate + ADP. Its pathway is amino-acid biosynthesis; L-arginine biosynthesis; N(2)-acetyl-L-ornithine from L-glutamate: step 2/4. Functionally, catalyzes the ATP-dependent phosphorylation of N-acetyl-L-glutamate. In Anaeromyxobacter dehalogenans (strain 2CP-1 / ATCC BAA-258), this protein is Acetylglutamate kinase.